The sequence spans 375 residues: Saccharopine dehydrogenase [NAD(+), L-lysine-forming] (375 aa).

2 residues coordinate L-saccharopine: arginine 18 and lysine 78. Lysine 78 functions as the Proton acceptor in the catalytic mechanism. Histidine 96 functions as the Proton donor in the catalytic mechanism. L-saccharopine is bound at residue glutamine 101. Arginine 130 contacts NAD(+). L-saccharopine contacts are provided by arginine 131 and phenylalanine 135. Residues 203–204 (GR), aspartate 227, threonine 231, tyrosine 252, and valine 279 contribute to the NAD(+) site. A disulfide bond links cysteine 205 and cysteine 250. 280 to 282 (SAD) contacts L-saccharopine. 322 to 325 (IDHL) is an NAD(+) binding site.

Belongs to the AlaDH/PNT family. As to quaternary structure, monomer.

It catalyses the reaction L-saccharopine + NAD(+) + H2O = L-lysine + 2-oxoglutarate + NADH + H(+). It participates in amino-acid biosynthesis; L-lysine biosynthesis via AAA pathway; L-lysine from L-alpha-aminoadipate (fungal route): step 3/3. Functionally, catalyzes the NAD(+)-dependent cleavage of saccharopine to L-lysine and 2-oxoglutarate, the final step in the alpha-aminoadipate (AAA) pathway for lysin biosynthesis. The polypeptide is Saccharopine dehydrogenase [NAD(+), L-lysine-forming] (Emericella nidulans (strain FGSC A4 / ATCC 38163 / CBS 112.46 / NRRL 194 / M139) (Aspergillus nidulans)).